Reading from the N-terminus, the 691-residue chain is Pentatricopeptide repeat-containing protein At5g27110 (691 aa).

PPR repeat units follow at residues 38–68 (DVVL…FDIR), 70–104 (DVYI…SICV), 106–140 (DSFT…GYVC), 141–171 (DVVV…MPER), 172–206 (DVAS…GFEP), 207–241 (NSVS…GFEL), 242–272 (DEYV…MPRK), 273–307 (SLVA…GTRP), 308–342 (SQTT…VVNA), 343–373 (DIYV…TQKD), 374–408 (VAES…GVKP), 409–443 (DVVT…RLET), 444–474 (DELL…IPKK), 475–509 (DVVS…GLKP), 510–540 (DGVT…MRSK), and 546–576 (IIEH…TPET). A type E motif region spans residues 582 to 657 (LLSTLFSACC…KPGCSWIEMS (76 aa)). Residues 658–688 (DKVCHFFAEDRSHLRAENVYECLALLSGHME) are type E(+) motif.

It belongs to the PPR family. PCMP-E subfamily.

This chain is Pentatricopeptide repeat-containing protein At5g27110 (PCMP-E14), found in Arabidopsis thaliana (Mouse-ear cress).